A 194-amino-acid chain; its full sequence is Adenylate kinase isoenzyme 1 (194 aa).

An ATP-binding site is contributed by 19 to 24 (GSGKGT). The segment at 39–68 (STGDLLRAEVSSGSERGKKLQAIMEKGELV) is NMP. Residues threonine 40, arginine 45, 66 to 68 (ELV), 95 to 98 (GYPR), and glutamine 102 contribute to the AMP site. The LID stretch occupies residues 132-142 (KRGETSGRVDD). Arginine 133 contacts ATP. Residues arginine 139 and arginine 150 each coordinate AMP. Glycine 178 contributes to the ATP binding site.

The protein belongs to the adenylate kinase family. AK1 subfamily. In terms of assembly, monomer. It depends on Mg(2+) as a cofactor. In terms of tissue distribution, skeletal muscle.

It localises to the cytoplasm. The enzyme catalyses a ribonucleoside 5'-phosphate + ATP = a ribonucleoside 5'-diphosphate + ADP. It catalyses the reaction AMP + ATP = 2 ADP. It carries out the reaction dAMP + ATP = dADP + ADP. The catalysed reaction is dATP + AMP = dADP + ADP. The enzyme catalyses dAMP + dATP = 2 dADP. It catalyses the reaction a 2'-deoxyribonucleoside 5'-diphosphate + ATP = a 2'-deoxyribonucleoside 5'-triphosphate + ADP. It carries out the reaction a ribonucleoside 5'-diphosphate + ATP = a ribonucleoside 5'-triphosphate + ADP. The catalysed reaction is CDP + GTP = CTP + GDP. The enzyme catalyses GDP + ATP = GTP + ADP. It catalyses the reaction UDP + ATP = UTP + ADP. It carries out the reaction GTP + UDP = UTP + GDP. The catalysed reaction is dTDP + GTP = dTTP + GDP. The enzyme catalyses dCDP + GTP = dCTP + GDP. It catalyses the reaction dGDP + ATP = dGTP + ADP. It carries out the reaction dADP + GTP = dATP + GDP. The catalysed reaction is thiamine diphosphate + ADP = thiamine triphosphate + AMP. Functionally, catalyzes the reversible transfer of the terminal phosphate group between ATP and AMP. Also displays broad nucleoside diphosphate kinase activity. Plays an important role in cellular energy homeostasis and in adenine nucleotide metabolism. Also catalyzes at a very low rate the synthesis of thiamine triphosphate (ThTP) from thiamine diphosphate (ThDP) and ADP. This chain is Adenylate kinase isoenzyme 1, found in Gallus gallus (Chicken).